Reading from the N-terminus, the 514-residue chain is Glycosyltransferase-like At3g57200 (514 aa).

The segment at 1 to 23 (MAGLYSSSSSSKPTLSSSPSSSS) is disordered. Positions 1–39 (MAGLYSSSSSSKPTLSSSPSSSSSSRLFLLVTLLPLSLA) are cleaved as a signal peptide. N-linked (GlcNAc...) asparagine glycosylation is found at Asn156, Asn187, Asn251, and Asn460. Positions 457-514 (PSKNSSTADSTSGITRESSQETGKRRVLEFHLDVDGESQASAVPPQSPPGLEATQMEL) are disordered. Positions 458–473 (SKNSSTADSTSGITRE) are enriched in polar residues. Over residues 474-490 (SSQETGKRRVLEFHLDV) the composition is skewed to basic and acidic residues.

This sequence belongs to the glycosyltransferase 25 family.

It localises to the secreted. The protein resides in the cell wall. The protein localises to the cytoplasm. It is found in the cell membrane. Involved in the coordination between cell elongation and cellulose synthesis by promoting the expression of genes involved in cell elongation and cellulose synthesis. Acts as a regulator of plasmodesmatal permeability. Maybe a glycosyltransferase. The chain is Glycosyltransferase-like At3g57200 from Arabidopsis thaliana (Mouse-ear cress).